The primary structure comprises 330 residues: Putative glycosyltransferase ORF330 (330 aa).

The protein belongs to the glycosyltransferase group 1 family. Glycosyltransferase 4 subfamily.

The sequence is that of Putative glycosyltransferase ORF330 from Acidianus filamentous virus 2 (isolate Italy/Pozzuoli) (AFV-2).